Reading from the N-terminus, the 573-residue chain is Probable D-xylulose kinase A (573 aa).

Residues histidine 97, arginine 168, aspartate 284, and asparagine 285 each coordinate substrate. ATP is bound by residues tryptophan 366, 471–472 (GG), and asparagine 475.

Belongs to the FGGY kinase family.

Its subcellular location is the cytoplasm. It carries out the reaction D-xylulose + ATP = D-xylulose 5-phosphate + ADP + H(+). Highly specific D-xylulose kinase which participates in the catabolism of xylose. Xylose is a major component of hemicelluloses such as xylan. Most fungi utilize D-xylose via three enzymatic reactions, xylose reductase (XR), xylitol dehydrogenase (XDH), and xylulokinase, to form xylulose 5-phosphate, which enters pentose phosphate pathway. This is Probable D-xylulose kinase A (xkiA) from Aspergillus clavatus (strain ATCC 1007 / CBS 513.65 / DSM 816 / NCTC 3887 / NRRL 1 / QM 1276 / 107).